Here is a 982-residue protein sequence, read N- to C-terminus: Glycine dehydrogenase (decarboxylating) (982 aa).

K729 is subject to N6-(pyridoxal phosphate)lysine.

It belongs to the GcvP family. The glycine cleavage system is composed of four proteins: P, T, L and H. The cofactor is pyridoxal 5'-phosphate.

The catalysed reaction is N(6)-[(R)-lipoyl]-L-lysyl-[glycine-cleavage complex H protein] + glycine + H(+) = N(6)-[(R)-S(8)-aminomethyldihydrolipoyl]-L-lysyl-[glycine-cleavage complex H protein] + CO2. In terms of biological role, the glycine cleavage system catalyzes the degradation of glycine. The P protein binds the alpha-amino group of glycine through its pyridoxal phosphate cofactor; CO(2) is released and the remaining methylamine moiety is then transferred to the lipoamide cofactor of the H protein. The sequence is that of Glycine dehydrogenase (decarboxylating) from Ralstonia nicotianae (strain ATCC BAA-1114 / GMI1000) (Ralstonia solanacearum).